The sequence spans 166 residues: Keratin, type II cytoskeletal 68 kDa, component IB (166 aa).

One can recognise an IF rod domain in the interval 1 to 41; it reads EAKDDLARLLRDYQDAMNVKLALDVEIATYRKLLEGEECRM. Positions 1 to 41 are coil 2B; that stretch reads EAKDDLARLLRDYQDAMNVKLALDVEIATYRKLLEGEECRM. The tail stretch occupies residues 42 to 166; it reads SGECPSAVSI…FSQSSQRTSR (125 aa). The span at 122-146 shows a compositional bias: gly residues; it reads GFGGGSSGFGSGSGGRSGVSGGGLS. The interval 122–166 is disordered; sequence GFGGGSSGFGSGSGGRSGVSGGGLSSGSSRGGSVRFSQSSQRTSR. The span at 147 to 166 shows a compositional bias: low complexity; it reads SGSSRGGSVRFSQSSQRTSR.

It belongs to the intermediate filament family. In terms of assembly, heterotetramer of two type I and two type II keratins.

This is Keratin, type II cytoskeletal 68 kDa, component IB from Bos taurus (Bovine).